Here is a 104-residue protein sequence, read N- to C-terminus: Circadian clock oscillator protein KaiB (104 aa).

It belongs to the KaiB family. In terms of assembly, the KaiABC complex composition changes during the circadian cycle to control KaiC phosphorylation. Complexes KaiC(6), KaiA(2-4):KaiC(6), KaiB(6):KaiC(6) and KaiC(6):KaiB(6):KaiA(12) are among the most important forms, many form cooperatively. Undergoes a major conformational rearrangment; in the free state forms homotetramers as a dimer of dimers. When bound to the CI domain of KaiC switches to a monomeric thioredoxin-fold (KaiB(fs)). KaiB(fs) binds CikA, leading it to dephosphorylate phospho-RpaA.

Key component of the KaiABC oscillator complex, which constitutes the main circadian regulator in cyanobacteria. Complex composition changes during the circadian cycle to control KaiC phosphorylation. KaiA stimulates KaiC autophosphorylation, while KaiB sequesters KaiA, leading to KaiC autodephosphorylation. Phospho-Ser-431 KaiC accumulation triggers binding of KaiB to form the KaiB(6):KaiC(6) complex, leading to changes in output regulators CikA and SasA. KaiB switches to a thioredoxin-like fold (KaiB(fs)) when bound to KaiC. KaiB(6):KaiC(6) formation exposes a site for KaiA binding that sequesters KaiA from KaiC, making the KaiC(6):KaiB(6):KaiA(12) complex that results in KaiC autodephosphorylation. In terms of biological role, a metamorphic protein which reversibly switches between an inactive tetrameric fold and a rare, thioredoxin-like monomeric fold (KaiB(fs)). KaiB(fs) binds phospho-KaiC, KaiA and CikA. KaiA and CikA compete for binding to KaiB(fs), and KaiB(fs) and SasA compete for binding to KaiC, thus the clock oscillator and output signal pathway are tightly coupled. The sequence is that of Circadian clock oscillator protein KaiB from Nostoc punctiforme (strain ATCC 29133 / PCC 73102).